Here is a 315-residue protein sequence, read N- to C-terminus: Homoserine kinase (315 aa).

97 to 107 is a binding site for ATP; the sequence is PPARGLGSSAT.

It belongs to the GHMP kinase family. Homoserine kinase subfamily.

It localises to the cytoplasm. It catalyses the reaction L-homoserine + ATP = O-phospho-L-homoserine + ADP + H(+). It functions in the pathway amino-acid biosynthesis; L-threonine biosynthesis; L-threonine from L-aspartate: step 4/5. Its function is as follows. Catalyzes the ATP-dependent phosphorylation of L-homoserine to L-homoserine phosphate. The polypeptide is Homoserine kinase (Prochlorococcus marinus (strain MIT 9515)).